Reading from the N-terminus, the 430-residue chain is Serine--tRNA ligase (430 aa).

Residues 45–58 (ENLQAERNSRSKSI) are compositionally biased toward polar residues. The interval 45-65 (ENLQAERNSRSKSIGQAKARG) is disordered. 237-239 (TSE) contacts L-serine. 268–270 (RSE) contributes to the ATP binding site. Glu291 provides a ligand contact to L-serine. An ATP-binding site is contributed by 355-358 (EISS). Residue Ser391 coordinates L-serine.

This sequence belongs to the class-II aminoacyl-tRNA synthetase family. Type-1 seryl-tRNA synthetase subfamily. Homodimer. The tRNA molecule binds across the dimer.

The protein resides in the cytoplasm. The catalysed reaction is tRNA(Ser) + L-serine + ATP = L-seryl-tRNA(Ser) + AMP + diphosphate + H(+). The enzyme catalyses tRNA(Sec) + L-serine + ATP = L-seryl-tRNA(Sec) + AMP + diphosphate + H(+). It participates in aminoacyl-tRNA biosynthesis; selenocysteinyl-tRNA(Sec) biosynthesis; L-seryl-tRNA(Sec) from L-serine and tRNA(Sec): step 1/1. Its function is as follows. Catalyzes the attachment of serine to tRNA(Ser). Is also able to aminoacylate tRNA(Sec) with serine, to form the misacylated tRNA L-seryl-tRNA(Sec), which will be further converted into selenocysteinyl-tRNA(Sec). The sequence is that of Serine--tRNA ligase from Erwinia tasmaniensis (strain DSM 17950 / CFBP 7177 / CIP 109463 / NCPPB 4357 / Et1/99).